The primary structure comprises 429 residues: Serine--tRNA ligase (429 aa).

236–238 serves as a coordination point for L-serine; sequence TAE. ATP is bound at residue 267-269; it reads RSE. Glu290 is a binding site for L-serine. 354 to 357 contributes to the ATP binding site; it reads EISS. Position 390 (Ser390) interacts with L-serine.

The protein belongs to the class-II aminoacyl-tRNA synthetase family. Type-1 seryl-tRNA synthetase subfamily. Homodimer. The tRNA molecule binds across the dimer.

It localises to the cytoplasm. The catalysed reaction is tRNA(Ser) + L-serine + ATP = L-seryl-tRNA(Ser) + AMP + diphosphate + H(+). The enzyme catalyses tRNA(Sec) + L-serine + ATP = L-seryl-tRNA(Sec) + AMP + diphosphate + H(+). It functions in the pathway aminoacyl-tRNA biosynthesis; selenocysteinyl-tRNA(Sec) biosynthesis; L-seryl-tRNA(Sec) from L-serine and tRNA(Sec): step 1/1. Catalyzes the attachment of serine to tRNA(Ser). Is also able to aminoacylate tRNA(Sec) with serine, to form the misacylated tRNA L-seryl-tRNA(Sec), which will be further converted into selenocysteinyl-tRNA(Sec). This is Serine--tRNA ligase from Alcanivorax borkumensis (strain ATCC 700651 / DSM 11573 / NCIMB 13689 / SK2).